Here is a 488-residue protein sequence, read N- to C-terminus: 3-octaprenyl-4-hydroxybenzoate carboxy-lyase (488 aa).

Asparagine 172 contributes to the Mn(2+) binding site. Prenylated FMN is bound by residues 175–177 (IYR), 189–191 (RWL), and 194–195 (RG). Glutamate 238 provides a ligand contact to Mn(2+). Aspartate 287 (proton donor) is an active-site residue.

Belongs to the UbiD family. Homohexamer. Prenylated FMN is required as a cofactor. Requires Mn(2+) as cofactor.

The protein resides in the cell membrane. It catalyses the reaction a 4-hydroxy-3-(all-trans-polyprenyl)benzoate + H(+) = a 2-(all-trans-polyprenyl)phenol + CO2. It functions in the pathway cofactor biosynthesis; ubiquinone biosynthesis. In terms of biological role, catalyzes the decarboxylation of 3-octaprenyl-4-hydroxy benzoate to 2-octaprenylphenol, an intermediate step in ubiquinone biosynthesis. The sequence is that of 3-octaprenyl-4-hydroxybenzoate carboxy-lyase from Pseudomonas syringae pv. tomato (strain ATCC BAA-871 / DC3000).